Here is a 487-residue protein sequence, read N- to C-terminus: Meiotic recombination protein SPO11-4 (487 aa).

Positions 1-56 are disordered; it reads MDDSTDDDSYHPRKHYAYDRQVSSSRWRTSREYIRGPGPETHTTESAQDGQDPPAG. The Topo IIA-type catalytic domain occupies 119 to 252; sequence KSRVEARKTL…LGIIAAEKGI (134 aa). The active-site O-(5'-phospho-DNA)-tyrosine intermediate is the Tyr-213. Glu-301 and Asp-353 together coordinate Mg(2+).

The protein belongs to the TOP6A family. As to quaternary structure, homodimer. Interacts with TOP6B. Mg(2+) serves as cofactor.

It is found in the nucleus. It carries out the reaction ATP-dependent breakage, passage and rejoining of double-stranded DNA.. Functionally, required for meiotic recombination. Mediates DNA cleavage that forms the double-strand breaks (DSB) that initiate meiotic recombination. Possesses double-stranded DNA cleavage activity in vitro. The sequence is that of Meiotic recombination protein SPO11-4 (SPO11-4) from Oryza sativa subsp. japonica (Rice).